Reading from the N-terminus, the 340-residue chain is Protein LSM14 homolog car-1 (340 aa).

Residues 1-81 enclose the Sm domain; it reads MSNQTPYIGS…IKDLIVCDTP (81 aa). The span at 101 to 125 shows a compositional bias: low complexity; sequence SRSAPASDGAPAASAGSSRAGTPSR. The segment at 101 to 148 is disordered; sequence SRSAPASDGAPAASAGSSRAGTPSRNSPLGQIIQNQRPGRGGYQQNFQ. The span at 126-148 shows a compositional bias: polar residues; that stretch reads NSPLGQIIQNQRPGRGGYQQNFQ. The 37-residue stretch at 178 to 214 folds into the DFDF domain; that stretch reads VNHREKLKFESDFDFEKANEKFQEVLVDNLEKLNIED. The FFD box signature appears at 227–243; that stretch reads AFYDKKTSFFDNISCES. The TFG box signature appears at 251–271; that stretch reads TGRPDWKKERETNQETFGHNA. The segment at 277-340 is disordered; it reads YRRGFGGRGR…QGNTAAAAEQ (64 aa). The segment covering 280-296 has biased composition (gly residues); it reads GFGGRGRGGNRGYGGYN. Low complexity predominate over residues 312 to 325; it reads GYRQNNGGYRRGGY.

This sequence belongs to the LSM14 family.

It localises to the nucleus. Transcriptional regulator. Involved in modulating embryonic expression of ATP-dependent chaperone cdc-48.1. May play a role in mRNA gene silencing, and RNA granule (P-body) assembly. This chain is Protein LSM14 homolog car-1, found in Caenorhabditis elegans.